The primary structure comprises 1293 residues: DNA-directed RNA polymerase subunit beta' (1293 aa).

Residues cysteine 60, cysteine 62, cysteine 75, and cysteine 78 each contribute to the Zn(2+) site. The Mg(2+) site is built by aspartate 535, aspartate 537, and aspartate 539. Positions 877, 953, 960, and 963 each coordinate Zn(2+).

This sequence belongs to the RNA polymerase beta' chain family. The RNAP catalytic core consists of 2 alpha, 1 beta, 1 beta' and 1 omega subunit. When a sigma factor is associated with the core the holoenzyme is formed, which can initiate transcription. Mg(2+) serves as cofactor. The cofactor is Zn(2+).

The enzyme catalyses RNA(n) + a ribonucleoside 5'-triphosphate = RNA(n+1) + diphosphate. DNA-dependent RNA polymerase catalyzes the transcription of DNA into RNA using the four ribonucleoside triphosphates as substrates. In Kineococcus radiotolerans (strain ATCC BAA-149 / DSM 14245 / SRS30216), this protein is DNA-directed RNA polymerase subunit beta'.